The primary structure comprises 987 residues: Collagen alpha-1(I) chain (987 aa).

The disordered stretch occupies residues 1–987 (GPMGPSGPRG…PGPPGPPGPP (987 aa)). Over residues 20–39 (PQGFQGPPGEPGEPGASGPM) the composition is skewed to low complexity. Residues 51–65 (NGDDGEAGKPGRPGE) show a composition bias toward basic and acidic residues. Serine 93 carries the post-translational modification Phosphoserine. 2 stretches are compositionally biased toward low complexity: residues 101-117 (DAGP…PGEN) and 141-153 (AGAR…TGAA). Residues 155–167 (PPGPTGPAGPPGF) show a composition bias toward pro residues. Composition is skewed to low complexity over residues 201-251 (AGAA…APGP), 354-380 (KGIT…QDGR), 389-408 (ARGQ…AGEP), 422-444 (AVGA…AGPA), 516-543 (NGAP…PGIQ), 602-614 (PNGP…ARGA), 627-654 (AGFA…KGDA), 662-677 (PTGA…APGP), 686-696 (ATGFPGAAGRV), and 737-752 (SGEK…AGAP). Gly residues predominate over residues 756-765 (GPQGIGGQRG). The span at 799-809 (PPGPMGPPGIA) shows a compositional bias: pro residues. Residues 811-826 (PPGESGREGSPGAEGS) show a composition bias toward low complexity. A compositionally biased stretch (pro residues) spans 845–860 (AGPPGAPGAPGAPGPV). A compositionally biased stretch (basic and acidic residues) spans 896–907 (RGDKGETGEQGD). The segment covering 923-956 (PGEQGPSGASGPAGPRGPPGSAGAPGKDGINGIP) has biased composition (low complexity). Residues 972-987 (VGPPGPPGPPGPPGPP) are compositionally biased toward pro residues.

Belongs to the fibrillar collagen family. Trimers of one alpha 2(I) and two alpha 1(I) chains. In terms of processing, prolines at the third position of the tripeptide repeating unit (G-X-Y) are hydroxylated in some or all of the chains. Forms the fibrils of tendon, ligaments and bones. In bones, the fibrils are mineralized with calcium hydroxyapatite.

It localises to the secreted. The protein resides in the extracellular space. Its subcellular location is the extracellular matrix. Its function is as follows. Type I collagen is a member of group I collagen (fibrillar forming collagen). This is Collagen alpha-1(I) chain from Orycteropus afer (Aardvark).